Consider the following 215-residue polypeptide: Octanoyltransferase (215 aa).

A BPL/LPL catalytic domain is found at 31-206; it reads PESQDEVWLV…QLVRHLDYAE (176 aa). Substrate is bound by residues 70–77, 137–139, and 150–152; these read RGGQVTYH, SLG, and GLA. Catalysis depends on cysteine 168, which acts as the Acyl-thioester intermediate.

The protein belongs to the LipB family.

The protein localises to the cytoplasm. It catalyses the reaction octanoyl-[ACP] + L-lysyl-[protein] = N(6)-octanoyl-L-lysyl-[protein] + holo-[ACP] + H(+). It functions in the pathway protein modification; protein lipoylation via endogenous pathway; protein N(6)-(lipoyl)lysine from octanoyl-[acyl-carrier-protein]: step 1/2. Catalyzes the transfer of endogenously produced octanoic acid from octanoyl-acyl-carrier-protein onto the lipoyl domains of lipoate-dependent enzymes. Lipoyl-ACP can also act as a substrate although octanoyl-ACP is likely to be the physiological substrate. The sequence is that of Octanoyltransferase from Pseudomonas entomophila (strain L48).